The sequence spans 309 residues: Methionyl-tRNA formyltransferase (309 aa).

(6S)-5,6,7,8-tetrahydrofolate is bound at residue 107–110 (SLLP).

The protein belongs to the Fmt family.

The catalysed reaction is L-methionyl-tRNA(fMet) + (6R)-10-formyltetrahydrofolate = N-formyl-L-methionyl-tRNA(fMet) + (6S)-5,6,7,8-tetrahydrofolate + H(+). Functionally, attaches a formyl group to the free amino group of methionyl-tRNA(fMet). The formyl group appears to play a dual role in the initiator identity of N-formylmethionyl-tRNA by promoting its recognition by IF2 and preventing the misappropriation of this tRNA by the elongation apparatus. In Borrelia duttonii (strain Ly), this protein is Methionyl-tRNA formyltransferase.